The primary structure comprises 565 residues: Sensor histidine kinase YpdA (565 aa).

Residues 1 to 3 (MHE) lie on the Cytoplasmic side of the membrane. A helical transmembrane segment spans residues 4–24 (IFNMLLAVFDRAALMLICLFF). The Periplasmic portion of the chain corresponds to 25 to 45 (LIRIRLFRELLHKSAHSPKEL). The chain crosses the membrane as a helical span at residues 46 to 66 (LAVTAIFSLFALFSTWSGVPV). Over 67 to 74 (EGSLVNVR) the chain is Cytoplasmic. The chain crosses the membrane as a helical span at residues 75–95 (IIAVMSGGILFGPWVGIITGV). At 96-107 (IAGIHRYLIDIG) the chain is on the periplasmic side. The helical transmembrane segment at 108-128 (GVTAIPCFITSILAGCISGWI) threads the bilayer. The Cytoplasmic portion of the chain corresponds to 129-139 (NLKIPKAQRWR). The chain crosses the membrane as a helical span at residues 140 to 160 (VGILGGMLCETLTMILVIVWA). At 161-172 (PTTALGIDIVSK) the chain is on the periplasmic side. Residues 173-193 (IGIPMILGSVCIGFIVLLVQS) traverse the membrane as a helical segment. At 194–565 (VEGEKEASAA…PVASQATLLL (372 aa)) the chain is on the cytoplasmic side. One can recognise a GAF domain in the interval 223-342 (VNSESLRKVC…AVGLSQIIST (120 aa)). Residues 343 to 554 (QLEVSRAEQL…EIAFYIPNQR (212 aa)) form the Histidine kinase domain. His371 carries the phosphohistidine; by autocatalysis modification.

In terms of assembly, interacts with BtsT and YhjX. Autophosphorylated.

It is found in the cell inner membrane. The enzyme catalyses ATP + protein L-histidine = ADP + protein N-phospho-L-histidine.. Member of the two-component regulatory system YpdA/YpdB, which is part of a nutrient-sensing regulatory network composed of YpdA/YpdB, the high-affinity pyruvate signaling system BtsS/BtsR and their respective target proteins, YhjX and BtsT. YpdA activates YpdB by phosphorylation in response to high concentrations of extracellular pyruvate. Activation of the YpdA/YpdB signaling cascade also promotes BtsS/BtsR-mediated btsT expression. In Escherichia coli (strain K12), this protein is Sensor histidine kinase YpdA (ypdA).